The chain runs to 228 residues: Urease accessory protein UreG (228 aa).

34 to 41 serves as a coordination point for GTP; the sequence is GPVGSGKT.

This sequence belongs to the SIMIBI class G3E GTPase family. UreG subfamily. In terms of assembly, homodimer. UreD, UreF and UreG form a complex that acts as a GTP-hydrolysis-dependent molecular chaperone, activating the urease apoprotein by helping to assemble the nickel containing metallocenter of UreC. The UreE protein probably delivers the nickel.

It localises to the cytoplasm. Facilitates the functional incorporation of the urease nickel metallocenter. This process requires GTP hydrolysis, probably effectuated by UreG. The protein is Urease accessory protein UreG of Rhodococcus opacus (strain B4).